Reading from the N-terminus, the 202-residue chain is Large ribosomal subunit protein uL13 (202 aa).

The protein belongs to the universal ribosomal protein uL13 family.

In Caenorhabditis elegans, this protein is Large ribosomal subunit protein uL13.